A 208-amino-acid polypeptide reads, in one-letter code: Apoptosis inhibitor 193R (208 aa).

Residues 1-25 (MDTCGIYNSDNEEFSQENDGENDGG) are disordered. Over residues 10–23 (DNEEFSQENDGEND) the composition is skewed to acidic residues. Residues 37-108 (YDERLNSFQN…QDLKINCLFV (72 aa)) form a BIR repeat. Positions 74, 77, 94, and 105 each coordinate Zn(2+). Tandem repeats lie at residues 134-139 (NQDLDH), 140-145 (NQDLDH), and 146-151 (NQDLDQ). The segment at 134-151 (NQDLDHNQDLDHNQDLDQ) is 3 X 6 AA tandem repeats. An RING-type zinc finger spans residues 163–197 (CKICFTNKITKVLIPCGHSSCYECVFKLQTCPICK).

The protein belongs to the IIV-6 193R family.

Its function is as follows. Plays a role early in infection by preventing host cell apoptosis. In Invertebrate iridescent virus 6 (IIV-6), this protein is Apoptosis inhibitor 193R.